Consider the following 245-residue polypeptide: Biosynthetic peptidoglycan transglycosylase (245 aa).

Residues 29–49 (IVLAVLIVLILPYALIVFYLL) traverse the membrane as a helical segment.

It belongs to the glycosyltransferase 51 family.

The protein localises to the cell inner membrane. The catalysed reaction is [GlcNAc-(1-&gt;4)-Mur2Ac(oyl-L-Ala-gamma-D-Glu-L-Lys-D-Ala-D-Ala)](n)-di-trans,octa-cis-undecaprenyl diphosphate + beta-D-GlcNAc-(1-&gt;4)-Mur2Ac(oyl-L-Ala-gamma-D-Glu-L-Lys-D-Ala-D-Ala)-di-trans,octa-cis-undecaprenyl diphosphate = [GlcNAc-(1-&gt;4)-Mur2Ac(oyl-L-Ala-gamma-D-Glu-L-Lys-D-Ala-D-Ala)](n+1)-di-trans,octa-cis-undecaprenyl diphosphate + di-trans,octa-cis-undecaprenyl diphosphate + H(+). Its pathway is cell wall biogenesis; peptidoglycan biosynthesis. Its function is as follows. Peptidoglycan polymerase that catalyzes glycan chain elongation from lipid-linked precursors. The chain is Biosynthetic peptidoglycan transglycosylase from Rhizobium johnstonii (strain DSM 114642 / LMG 32736 / 3841) (Rhizobium leguminosarum bv. viciae).